Reading from the N-terminus, the 377-residue chain is Peptidyl-prolyl cis-trans isomerase D (377 aa).

Residues 11 to 178 enclose the PPIase cyclophilin-type domain; that stretch reads YFDIQIGSQK…TDVTIVDCGE (168 aa). TPR repeat units follow at residues 220–253, 273–306, and 314–347; these read ASEL…LNEF, FTLH…ADAA, and AKAY…APGD.

It belongs to the cyclophilin-type PPIase family. PPIase D subfamily.

The protein localises to the cytoplasm. It catalyses the reaction [protein]-peptidylproline (omega=180) = [protein]-peptidylproline (omega=0). Functionally, PPIases accelerate the folding of proteins. It catalyzes the cis-trans isomerization of proline imidic peptide bonds in oligopeptides. The sequence is that of Peptidyl-prolyl cis-trans isomerase D (cpr6) from Aspergillus fumigatus (strain ATCC MYA-4609 / CBS 101355 / FGSC A1100 / Af293) (Neosartorya fumigata).